The following is a 120-amino-acid chain: Large ribosomal subunit protein uL22 (120 aa).

Belongs to the universal ribosomal protein uL22 family. As to quaternary structure, part of the 50S ribosomal subunit.

Its function is as follows. This protein binds specifically to 23S rRNA; its binding is stimulated by other ribosomal proteins, e.g. L4, L17, and L20. It is important during the early stages of 50S assembly. It makes multiple contacts with different domains of the 23S rRNA in the assembled 50S subunit and ribosome. The globular domain of the protein is located near the polypeptide exit tunnel on the outside of the subunit, while an extended beta-hairpin is found that lines the wall of the exit tunnel in the center of the 70S ribosome. The chain is Large ribosomal subunit protein uL22 from Corynebacterium efficiens (strain DSM 44549 / YS-314 / AJ 12310 / JCM 11189 / NBRC 100395).